The following is a 138-amino-acid chain: Large ribosomal subunit protein uL14 (138 aa).

The protein belongs to the universal ribosomal protein uL14 family. Part of the 50S ribosomal subunit. Forms a cluster with proteins L3 and L24e, part of which may contact the 16S rRNA in 2 intersubunit bridges. Contacts initiation factor aIF-6.

The protein localises to the cytoplasm. Its function is as follows. Binds to 23S rRNA. Forms part of two intersubunit bridges in the 70S ribosome. The chain is Large ribosomal subunit protein uL14 from Saccharolobus solfataricus (strain ATCC 35092 / DSM 1617 / JCM 11322 / P2) (Sulfolobus solfataricus).